A 490-amino-acid polypeptide reads, in one-letter code: Katanin p60 ATPase-containing subunit A-like 1 (490 aa).

N-acetylmethionine is present on Met1. Residues 87-182 (SCQDEPVRDP…ASDGEIPKFD (96 aa)) are disordered. The span at 116-127 (SNREVRPLRKDM) shows a compositional bias: basic and acidic residues. Positions 128 to 139 (AGVGARGPVGRA) are enriched in low complexity. Over residues 143-169 (SKSEKPSTSRDKDNRARGKDDKGRKNM) the composition is skewed to basic and acidic residues. Ser174 carries the post-translational modification Phosphoserine. Residue 248-255 (GPPGTGKT) coordinates ATP.

The protein belongs to the AAA ATPase family. Katanin p60 subunit A1 subfamily. A-like 1 sub-subfamily. In terms of assembly, interacts with KATNB1 and KATNBL1.

It is found in the cytoplasm. It localises to the cytoskeleton. Its subcellular location is the spindle pole. The protein resides in the spindle. It catalyses the reaction n ATP + n H2O + a microtubule = n ADP + n phosphate + (n+1) alpha/beta tubulin heterodimers.. Functionally, regulates microtubule dynamics in Sertoli cells, a process that is essential for spermiogenesis and male fertility. Severs microtubules in an ATP-dependent manner, promoting rapid reorganization of cellular microtubule arrays. Has microtubule-severing activity in vitro. This is Katanin p60 ATPase-containing subunit A-like 1 from Otolemur garnettii (Small-eared galago).